We begin with the raw amino-acid sequence, 208 residues long: MIVLALDVYDEDRALKIAEETKDYVAMIKVNWPLIIGSGLDIIRKLKDRTGLKIIADLKLADIPNTNKLIARKVYEAGADYIIVHPFVGRDSVEAVNELGEIILVVEMSHPGALEFINPLTDKFIELANDVEPFGVIAPGTRPERVKYIRERLKEGVKILTPGIGAQGGKAKEAIEAGADYVIVGRSIYNAPNPREAAREIYDEIRGE.

Substrate-binding positions include Asp-7, Lys-29, 57–66 (DLKLADIPNT), Ser-109, 162–172 (PGIGAQGGKAK), Gly-185, and Arg-186. Lys-59 functions as the Proton donor in the catalytic mechanism.

This sequence belongs to the OMP decarboxylase family. Type 1 subfamily. As to quaternary structure, homodimer.

It carries out the reaction orotidine 5'-phosphate + H(+) = UMP + CO2. It functions in the pathway pyrimidine metabolism; UMP biosynthesis via de novo pathway; UMP from orotate: step 2/2. In terms of biological role, catalyzes the decarboxylation of orotidine 5'-monophosphate (OMP) to uridine 5'-monophosphate (UMP). The sequence is that of Orotidine 5'-phosphate decarboxylase from Pyrococcus abyssi (strain GE5 / Orsay).